Consider the following 413-residue polypeptide: Multifunctional CCA protein (413 aa).

ATP is bound by residues Gly8 and Arg11. 2 residues coordinate CTP: Gly8 and Arg11. The Mg(2+) site is built by Asp21 and Asp23. Residues Arg91, Arg137, and Arg140 each coordinate ATP. 3 residues coordinate CTP: Arg91, Arg137, and Arg140. In terms of domain architecture, HD spans 228 to 329 (TGKHTLLSLK…VSLFDKGDFW (102 aa)).

Belongs to the tRNA nucleotidyltransferase/poly(A) polymerase family. Bacterial CCA-adding enzyme type 1 subfamily. In terms of assembly, monomer. Can also form homodimers and oligomers. Requires Mg(2+) as cofactor. The cofactor is Ni(2+).

The catalysed reaction is a tRNA precursor + 2 CTP + ATP = a tRNA with a 3' CCA end + 3 diphosphate. It carries out the reaction a tRNA with a 3' CCA end + 2 CTP + ATP = a tRNA with a 3' CCACCA end + 3 diphosphate. Functionally, catalyzes the addition and repair of the essential 3'-terminal CCA sequence in tRNAs without using a nucleic acid template. Adds these three nucleotides in the order of C, C, and A to the tRNA nucleotide-73, using CTP and ATP as substrates and producing inorganic pyrophosphate. tRNA 3'-terminal CCA addition is required both for tRNA processing and repair. Also involved in tRNA surveillance by mediating tandem CCA addition to generate a CCACCA at the 3' terminus of unstable tRNAs. While stable tRNAs receive only 3'-terminal CCA, unstable tRNAs are marked with CCACCA and rapidly degraded. This Shewanella denitrificans (strain OS217 / ATCC BAA-1090 / DSM 15013) protein is Multifunctional CCA protein.